Reading from the N-terminus, the 462-residue chain is Sonic hedgehog protein (462 aa).

Residues 1–23 (MLLLARCLLLVLVSSLLVCSGLA) form the signal peptide. C24 is lipidated: N-palmitoyl cysteine. The short motif at 32–38 (KRRHPKK) is the Cardin-Weintraub element. Ca(2+) contacts are provided by E89, E90, D95, T125, E126, D129, and D131. H140, D147, and H182 together coordinate Zn(2+). Residue G197 is the site of Cholesterol glycine ester attachment. The N-linked (GlcNAc...) asparagine glycan is linked to N278. 2 disordered regions span residues 279–302 (DSATGEPEASSGSGPPSGGALGPR) and 395–414 (TDRGGDSGGGDRGGGGGRVA). Residues 283–292 (GEPEASSGSG) show a composition bias toward low complexity. Positions 400–412 (DSGGGDRGGGGGR) are enriched in gly residues.

Belongs to the hedgehog family. Multimer. In terms of assembly, interacts with HHATL/GUP1 which negatively regulates HHAT-mediated palmitoylation of the SHH N-terminus. Interacts with BOC and CDON. Interacts with HHIP. Interacts with DISP1 via its cholesterol anchor. Interacts with SCUBE2. Interacts with glypican GPC3. Post-translationally, the C-terminal domain displays an autoproteolysis activity and a cholesterol transferase activity. Both activities result in the cleavage of the full-length protein and covalent attachment of a cholesterol moiety to the C-terminal of the newly generated N-terminal fragment (ShhN). Cholesterylation is required for the sonic hedgehog protein N-product targeting to lipid rafts and multimerization. ShhN is the active species in both local and long-range signaling, whereas the C-product (ShhC) is degraded in the endoplasmic reticulum. In terms of processing, N-palmitoylation by HHAT of ShhN is required for sonic hedgehog protein N-product multimerization and full activity. It is a prerequisite for the membrane-proximal positioning and the subsequent shedding of this N-terminal peptide. The lipidated N- and C-terminal peptides of ShhNp can be cleaved (shedding). The N-terminal palmitoylated peptide is cleaved at the Cardin-Weintraub (CW) motif site. The cleavage reduced the interactions with heparan sulfate. The cleavage is enhanced by SCUBE2.

Its subcellular location is the endoplasmic reticulum membrane. The protein localises to the golgi apparatus membrane. It is found in the secreted. The protein resides in the cell membrane. It catalyses the reaction glycyl-L-cysteinyl-[protein] + cholesterol + H(+) = [protein]-C-terminal glycyl cholesterol ester + N-terminal L-cysteinyl-[protein]. In terms of biological role, the C-terminal part of the sonic hedgehog protein precursor displays an autoproteolysis and a cholesterol transferase activity. Both activities result in the cleavage of the full-length protein into two parts (ShhN and ShhC) followed by the covalent attachment of a cholesterol moiety to the C-terminal of the newly generated ShhN. Both activities occur in the endoplasmic reticulum. Once cleaved, ShhC is degraded in the endoplasmic reticulum. The dually lipidated sonic hedgehog protein N-product (ShhNp) is a morphogen which is essential for a variety of patterning events during development. Induces ventral cell fate in the neural tube and somites. Involved in the patterning of the anterior-posterior axis of the developing limb bud. Essential for axon guidance. Binds to the patched (PTCH1) receptor, which functions in association with smoothened (SMO), to activate the transcription of target genes. In the absence of SHH, PTCH1 represses the constitutive signaling activity of SMO. The polypeptide is Sonic hedgehog protein (Homo sapiens (Human)).